Here is a 599-residue protein sequence, read N- to C-terminus: Sulfite reductase [NADPH] flavoprotein alpha-component (599 aa).

In terms of domain architecture, Flavodoxin-like spans 64-202 (VTLISASQTG…AASEWRACVV (139 aa)). Residues 70–75 (SQTGNA), 117–120 (STQG), and 153–162 (LGDTSYEFFC) contribute to the FMN site. The FAD-binding FR-type domain maps to 234 to 448 (DAPLTATLSV…IEHNDNFRLP (215 aa)). FAD-binding positions include T322, A356, 386–389 (RLYS), 404–406 (TVG), Y410, and 419–422 (GGAS). NADP(+) contacts are provided by residues 519–520 (SR), 525–529 (KIYVQ), and D561. Y599 contributes to the FAD binding site.

This sequence belongs to the NADPH-dependent sulphite reductase flavoprotein subunit CysJ family. The protein in the N-terminal section; belongs to the flavodoxin family. In the C-terminal section; belongs to the flavoprotein pyridine nucleotide cytochrome reductase family. As to quaternary structure, alpha(8)-beta(8). The alpha component is a flavoprotein, the beta component is a hemoprotein. The cofactor is FAD. Requires FMN as cofactor.

It catalyses the reaction hydrogen sulfide + 3 NADP(+) + 3 H2O = sulfite + 3 NADPH + 4 H(+). It participates in sulfur metabolism; hydrogen sulfide biosynthesis; hydrogen sulfide from sulfite (NADPH route): step 1/1. Its function is as follows. Component of the sulfite reductase complex that catalyzes the 6-electron reduction of sulfite to sulfide. This is one of several activities required for the biosynthesis of L-cysteine from sulfate. The flavoprotein component catalyzes the electron flow from NADPH -&gt; FAD -&gt; FMN to the hemoprotein component. In Salmonella typhi, this protein is Sulfite reductase [NADPH] flavoprotein alpha-component.